The primary structure comprises 467 residues: Argininosuccinate lyase 1 (467 aa).

This sequence belongs to the lyase 1 family. Argininosuccinate lyase subfamily.

The protein localises to the cytoplasm. It catalyses the reaction 2-(N(omega)-L-arginino)succinate = fumarate + L-arginine. It participates in amino-acid biosynthesis; L-arginine biosynthesis; L-arginine from L-ornithine and carbamoyl phosphate: step 3/3. The chain is Argininosuccinate lyase 1 from Rhizobium meliloti (strain 1021) (Ensifer meliloti).